Here is a 50-residue protein sequence, read N- to C-terminus: uncharacterized protein (50 aa).

This is an uncharacterized protein from His1 virus (isolate Australia/Victoria) (His1V).